The chain runs to 60 residues: Cytotoxin 1 (60 aa).

4 disulfides stabilise this stretch: cysteine 3–cysteine 21, cysteine 14–cysteine 38, cysteine 42–cysteine 53, and cysteine 54–cysteine 59.

The protein belongs to the three-finger toxin family. Short-chain subfamily. Type IA cytotoxin sub-subfamily. In terms of assembly, monomer in solution; Homodimer and oligomer in the presence of negatively charged lipids forming a pore with a size ranging between 20 and 30 angstroms. As to expression, expressed by the venom gland.

It localises to the secreted. It is found in the target cell membrane. In terms of biological role, basic protein that binds to cell membrane and depolarizes cardiomyocytes. This cytotoxin also possesses lytic activity on many other cells, including red blood cells. Interaction with sulfatides in the cell membrane induces pore formation and cell internalization and is responsible for cytotoxicity in cardiomyocytes. It targets the mitochondrial membrane and induces mitochondrial swelling and fragmentation. Inhibits protein kinases C. It binds to the integrin alpha-V/beta-3 with a moderate affinity. The sequence is that of Cytotoxin 1 from Naja pallida (Red spitting cobra).